A 230-amino-acid chain; its full sequence is MAAAAAAAAQRLLAASTKIIGVGRNYVAHAKELGNPVPKEPLLFLKPTSSFLHAGVAGAAIEVPGPVESLHHEVELAVVLSQRARDVPEASAMDFVGGYALALDMTAREFQSAAKSAGLPWTLCKAQDTFTPISAVIPKSAVANPNDLELWLKVDDELRQKGSTSDMIFKIPSLISYISSIMTLMEGDVILTGTPEGVGPVRPGQKIKAGITGLVDVEFDVQKRKRSFST.

Residues 1–26 constitute a mitochondrion transit peptide; it reads MAAAAAAAAQRLLAASTKIIGVGRNY. Mg(2+)-binding residues include E73, E75, and D104.

The protein belongs to the FAH family. The cofactor is Mg(2+). Mn(2+) serves as cofactor.

The protein resides in the mitochondrion. The enzyme catalyses oxaloacetate = enol-oxaloacetate. Tautomerase that converts enol-oxaloacetate, a strong inhibitor of succinate dehydrogenase, to the physiological keto form of oxaloacetate. The polypeptide is Oxaloacetate tautomerase FAHD1, mitochondrial (Oryza sativa subsp. japonica (Rice)).